The sequence spans 256 residues: Thiazole synthase (256 aa).

Residue Lys95 is the Schiff-base intermediate with DXP of the active site. 1-deoxy-D-xylulose 5-phosphate is bound by residues Gly156, 182-183, and 204-205; these read AG and NT.

Belongs to the ThiG family. As to quaternary structure, homotetramer. Forms heterodimers with either ThiH or ThiS.

The protein resides in the cytoplasm. The enzyme catalyses [ThiS sulfur-carrier protein]-C-terminal-Gly-aminoethanethioate + 2-iminoacetate + 1-deoxy-D-xylulose 5-phosphate = [ThiS sulfur-carrier protein]-C-terminal Gly-Gly + 2-[(2R,5Z)-2-carboxy-4-methylthiazol-5(2H)-ylidene]ethyl phosphate + 2 H2O + H(+). It participates in cofactor biosynthesis; thiamine diphosphate biosynthesis. Catalyzes the rearrangement of 1-deoxy-D-xylulose 5-phosphate (DXP) to produce the thiazole phosphate moiety of thiamine. Sulfur is provided by the thiocarboxylate moiety of the carrier protein ThiS. In vitro, sulfur can be provided by H(2)S. This is Thiazole synthase from Salmonella choleraesuis (strain SC-B67).